The primary structure comprises 407 residues: Imidazolonepropionase (407 aa).

Positions 72 and 74 each coordinate Fe(3+). Zn(2+) is bound by residues His-72 and His-74. Arg-81, Tyr-144, and His-177 together coordinate 4-imidazolone-5-propanoate. Residue Tyr-144 participates in N-formimidoyl-L-glutamate binding. His-242 provides a ligand contact to Fe(3+). A Zn(2+)-binding site is contributed by His-242. Gln-245 serves as a coordination point for 4-imidazolone-5-propanoate. Asp-317 provides a ligand contact to Fe(3+). Asp-317 provides a ligand contact to Zn(2+). Residues Asn-319 and Gly-321 each contribute to the N-formimidoyl-L-glutamate site. Thr-322 contacts 4-imidazolone-5-propanoate.

It belongs to the metallo-dependent hydrolases superfamily. HutI family. Zn(2+) serves as cofactor. The cofactor is Fe(3+).

It localises to the cytoplasm. It carries out the reaction 4-imidazolone-5-propanoate + H2O = N-formimidoyl-L-glutamate. It functions in the pathway amino-acid degradation; L-histidine degradation into L-glutamate; N-formimidoyl-L-glutamate from L-histidine: step 3/3. Catalyzes the hydrolytic cleavage of the carbon-nitrogen bond in imidazolone-5-propanoate to yield N-formimidoyl-L-glutamate. It is the third step in the universal histidine degradation pathway. The sequence is that of Imidazolonepropionase from Aliivibrio salmonicida (strain LFI1238) (Vibrio salmonicida (strain LFI1238)).